Consider the following 403-residue polypeptide: Argininosuccinate synthase (403 aa).

10-18 (AYSGGLDTS) contributes to the ATP binding site. Tyrosine 87 is an L-citrulline binding site. An ATP-binding site is contributed by glycine 117. Residues threonine 119, asparagine 123, and aspartate 124 each contribute to the L-aspartate site. Asparagine 123 is an L-citrulline binding site. Residues arginine 127, serine 175, glutamate 260, and tyrosine 272 each coordinate L-citrulline.

Belongs to the argininosuccinate synthase family. Type 1 subfamily. In terms of assembly, homotetramer.

It localises to the cytoplasm. It catalyses the reaction L-citrulline + L-aspartate + ATP = 2-(N(omega)-L-arginino)succinate + AMP + diphosphate + H(+). Its pathway is amino-acid biosynthesis; L-arginine biosynthesis; L-arginine from L-ornithine and carbamoyl phosphate: step 2/3. This is Argininosuccinate synthase from Bacillus velezensis (strain DSM 23117 / BGSC 10A6 / LMG 26770 / FZB42) (Bacillus amyloliquefaciens subsp. plantarum).